The sequence spans 200 residues: Interleukin 17-like protein (200 aa).

The N-terminal stretch at 1-26 (MGNFFLFAMTLVVCSVIVLLTGVADS) is a signal peptide. N-linked (GlcNAc...) asparagine glycosylation is present at asparagine 46. 2 disulfides stabilise this stretch: cysteine 122–cysteine 175 and cysteine 127–cysteine 177. An N-linked (GlcNAc...) asparagine glycan is attached at asparagine 192.

This sequence belongs to the IL-17 family. Expressed in several tissues including hemocytes, gills, mantle, adductor muscle, labial palps, digestive glands and heart with highest levels in gills and lowest levels in adductor muscle and heart.

The protein localises to the secreted. This Magallana gigas (Pacific oyster) protein is Interleukin 17-like protein.